We begin with the raw amino-acid sequence, 553 residues long: CTP synthase (553 aa).

The segment at 1-278 (MVRRTHGNSQ…DAYVVRELGL (278 aa)) is amidoligase domain. S25 is a CTP binding site. Position 25 (S25) interacts with UTP. Residues 26–31 (SLGKGL) and D83 each bind ATP. D83 and E152 together coordinate Mg(2+). Residues 159 to 161 (DIE), 199 to 204 (KTKPTQ), and K235 each bind CTP. UTP-binding positions include 199-204 (KTKPTQ) and K235. Residues 303–552 (NIAIVGKYID…VKAALDHQAA (250 aa)) enclose the Glutamine amidotransferase type-1 domain. An L-glutamine-binding site is contributed by G366. The Nucleophile; for glutamine hydrolysis role is filled by C393. Residues 394–397 (LGLQ), E417, and R478 contribute to the L-glutamine site. Residues H525 and E527 contribute to the active site.

The protein belongs to the CTP synthase family. As to quaternary structure, homotetramer.

The catalysed reaction is UTP + L-glutamine + ATP + H2O = CTP + L-glutamate + ADP + phosphate + 2 H(+). The enzyme catalyses L-glutamine + H2O = L-glutamate + NH4(+). It carries out the reaction UTP + NH4(+) + ATP = CTP + ADP + phosphate + 2 H(+). Its pathway is pyrimidine metabolism; CTP biosynthesis via de novo pathway; CTP from UDP: step 2/2. With respect to regulation, allosterically activated by GTP, when glutamine is the substrate; GTP has no effect on the reaction when ammonia is the substrate. The allosteric effector GTP functions by stabilizing the protein conformation that binds the tetrahedral intermediate(s) formed during glutamine hydrolysis. Inhibited by the product CTP, via allosteric rather than competitive inhibition. In terms of biological role, catalyzes the ATP-dependent amination of UTP to CTP with either L-glutamine or ammonia as the source of nitrogen. Regulates intracellular CTP levels through interactions with the four ribonucleotide triphosphates. In Bifidobacterium longum (strain NCC 2705), this protein is CTP synthase.